Consider the following 74-residue polypeptide: U12-theraphotoxin-Hs1a (74 aa).

A signal peptide spans 1–20; the sequence is MNVKILLLLVGLNLVMHSNA. The propeptide occupies 21–40; it reads TGDSETNPAETLFIEEIFRR. 3 disulfides stabilise this stretch: C42–C56, C49–C61, and C55–C71.

The protein belongs to the neurotoxin 35 family. Expressed by the venom gland.

The protein localises to the secreted. Functionally, putative ion channel inhibitor. The polypeptide is U12-theraphotoxin-Hs1a (Cyriopagopus schmidti (Chinese bird spider)).